We begin with the raw amino-acid sequence, 460 residues long: Diguanylate cyclase DosC (460 aa).

His98 contacts heme. Positions Thr325–Ala458 constitute a GGDEF domain. Mg(2+) is bound at residue Asp333. Positions 341 and 350 each coordinate substrate. Residue Asp376 coordinates Mg(2+). The Proton acceptor role is filled by Asp376.

It depends on heme as a cofactor. Mg(2+) is required as a cofactor.

The enzyme catalyses 2 GTP = 3',3'-c-di-GMP + 2 diphosphate. The protein operates within purine metabolism; 3',5'-cyclic di-GMP biosynthesis. In terms of biological role, globin-coupled heme-based oxygen sensor protein displaying diguanylate cyclase (DGC) activity in response to oxygen availability. Thus, catalyzes the synthesis of cyclic diguanylate (c-di-GMP) via the condensation of 2 GTP molecules. Cyclic-di-GMP is a second messenger which controls cell surface-associated traits in bacteria. The sequence is that of Diguanylate cyclase DosC (dosC) from Shigella sonnei (strain Ss046).